The sequence spans 222 residues: Large ribosomal subunit protein uL11c (222 aa).

The disordered stretch occupies residues 1-20 (MASSSLSTLCSSTSSSLHPN). The transit peptide at 1-62 (MASSSLSTLC…TPRFLTVIAM (62 aa)) directs the protein to the chloroplast.

The protein belongs to the universal ribosomal protein uL11 family. In terms of assembly, part of the ribosomal stalk of the 50S ribosomal subunit. Interacts with L10 and the large rRNA to form the base of the stalk. L10 forms an elongated spine to which L12 dimers bind in a sequential fashion forming a multimeric L10(L12)X complex.

The protein localises to the plastid. The protein resides in the chloroplast. Functionally, forms part of the ribosomal stalk which helps the ribosome interact with GTP-bound translation factors. The chain is Large ribosomal subunit protein uL11c (RPL11) from Arabidopsis thaliana (Mouse-ear cress).